A 344-amino-acid chain; its full sequence is MYVIESKGGTITCMLLALLFLGTWPAIMTLTERRGRLPQHTYLDYTLTNLLAAVIIAFTLGEISPSRPNFTTQLSQDNWPSVMFAMAGGIFLSLGTLATQYAWAFVGLSVTEVITASIAVVIGTTLNYFLDDRINRAEVLFPGVACFLIAVCFGSAVHKSNAADNKSKLQGFKSLETTSSFQMETSSIKEGKAKVGTADFLIEVEKQRAIKVFGKSTIIGLAITFFAVPKLNVYTAFFYFSISSFGVGLILNIIFLYWPILGLPRSSFKAYLNDWNGRGWSFLAGFLCGFGNGLQFMGGQAAGYAAAGAVQIENKHFGGYCCLENTKDHQEKHIHFLSVCYLCS.

Topologically, residues 1-10 (MYVIESKGGT) are extracellular. A helical membrane pass occupies residues 11–31 (ITCMLLALLFLGTWPAIMTLT). The Cytoplasmic portion of the chain corresponds to 32–42 (ERRGRLPQHTY). A helical membrane pass occupies residues 43–63 (LDYTLTNLLAAVIIAFTLGEI). Topologically, residues 64–78 (SPSRPNFTTQLSQDN) are extracellular. Residues 79–99 (WPSVMFAMAGGIFLSLGTLAT) form a helical membrane-spanning segment. Residues 100 to 101 (QY) lie on the Cytoplasmic side of the membrane. The helical transmembrane segment at 102–122 (AWAFVGLSVTEVITASIAVVI) threads the bilayer. Residues 123-136 (GTTLNYFLDDRINR) are Extracellular-facing. Residues 137–157 (AEVLFPGVACFLIAVCFGSAV) traverse the membrane as a helical segment. Residues 158-208 (HKSNAADNKSKLQGFKSLETTSSFQMETSSIKEGKAKVGTADFLIEVEKQR) are Cytoplasmic-facing. 209–216 (AIKVFGKS) contacts ATP. The helical transmembrane segment at 209–229 (AIKVFGKSTIIGLAITFFAVP) threads the bilayer. The Extracellular segment spans residues 230–235 (KLNVYT). The chain crosses the membrane as a helical span at residues 236 to 256 (AFFYFSISSFGVGLILNIIFL). Residues 257–278 (YWPILGLPRSSFKAYLNDWNGR) are Cytoplasmic-facing. Residues 279–299 (GWSFLAGFLCGFGNGLQFMGG) traverse the membrane as a helical segment. Residues 300–344 (QAAGYAAAGAVQIENKHFGGYCCLENTKDHQEKHIHFLSVCYLCS) lie on the Extracellular side of the membrane.

The protein belongs to the plant ureide permease (TC 2.A.7.19) family.

It localises to the membrane. In terms of biological role, proton-coupled transporter that transports a wide spectrum of oxo derivatives of heterocyclic nitrogen compounds. This is Ureide permease 3 from Arabidopsis thaliana (Mouse-ear cress).